A 189-amino-acid polypeptide reads, in one-letter code: MKVIIGLGNPGKKYEDTRHNAGFMAIDKISDKWGIPVTQNKFRALVGEGRIEGEKVLLVKPQTYMNLSGESVAEVLKFYKLIPDDLVVIYDDLDLPTGHLRLREKGSAGGHNGIKSMIQHLGTQEFKRIKVGISRPEPGRSVSDYVLNTFPVAERADIQEAVSLAADACAMWTRESFLKVMNHFNSLKK.

Residue Tyr-14 participates in tRNA binding. Catalysis depends on His-19, which acts as the Proton acceptor. Residues Tyr-64, Asn-66, and Asn-112 each contribute to the tRNA site.

Belongs to the PTH family. In terms of assembly, monomer.

Its subcellular location is the cytoplasm. It carries out the reaction an N-acyl-L-alpha-aminoacyl-tRNA + H2O = an N-acyl-L-amino acid + a tRNA + H(+). Hydrolyzes ribosome-free peptidyl-tRNAs (with 1 or more amino acids incorporated), which drop off the ribosome during protein synthesis, or as a result of ribosome stalling. In terms of biological role, catalyzes the release of premature peptidyl moieties from peptidyl-tRNA molecules trapped in stalled 50S ribosomal subunits, and thus maintains levels of free tRNAs and 50S ribosomes. This Brevibacillus brevis (strain 47 / JCM 6285 / NBRC 100599) protein is Peptidyl-tRNA hydrolase.